The primary structure comprises 265 residues: Homeobox protein engrailed-2-A (265 aa).

Basic and acidic residues-rich tracts occupy residues 1 to 12 and 102 to 115; these read MEENEQNNREVE and GEKK…ETLK. Disordered stretches follow at residues 1-38, 75-140, and 156-181; these read MEEN…QPHH, LSGA…KATQ, and DRPS…RPRT. Residues 122 to 136 are compositionally biased toward low complexity; that stretch reads DHSLSSDSDSSQTSS. Positions 176 to 235 form a DNA-binding region, homeobox; that stretch reads DKRPRTAFTADQLQRLKAEFQTNRYLTEQRRQSLAQELSLNESQIKIWFQNKRAKIKKAT.

The protein belongs to the engrailed homeobox family.

The protein localises to the nucleus. The protein is Homeobox protein engrailed-2-A (en2-a) of Xenopus laevis (African clawed frog).